Here is a 172-residue protein sequence, read N- to C-terminus: Arginine repressor (172 aa).

Belongs to the ArgR family.

It is found in the cytoplasm. The protein operates within amino-acid biosynthesis; L-arginine biosynthesis [regulation]. Its function is as follows. Regulates arginine biosynthesis genes. This chain is Arginine repressor, found in Bifidobacterium adolescentis (strain ATCC 15703 / DSM 20083 / NCTC 11814 / E194a).